Consider the following 583-residue polypeptide: Isocitrate dehydrogenase kinase/phosphatase (583 aa).

ATP contacts are provided by residues 315–321 (APGIRGM) and K336. D371 is a catalytic residue.

This sequence belongs to the AceK family.

It is found in the cytoplasm. The catalysed reaction is L-seryl-[isocitrate dehydrogenase] + ATP = O-phospho-L-seryl-[isocitrate dehydrogenase] + ADP + H(+). Its function is as follows. Bifunctional enzyme which can phosphorylate or dephosphorylate isocitrate dehydrogenase (IDH) on a specific serine residue. This is a regulatory mechanism which enables bacteria to bypass the Krebs cycle via the glyoxylate shunt in response to the source of carbon. When bacteria are grown on glucose, IDH is fully active and unphosphorylated, but when grown on acetate or ethanol, the activity of IDH declines drastically concomitant with its phosphorylation. The protein is Isocitrate dehydrogenase kinase/phosphatase of Salmonella dublin (strain CT_02021853).